The primary structure comprises 1024 residues: Beta-galactosidase (1024 aa).

N103 and D202 together coordinate substrate. D202 provides a ligand contact to Na(+). Mg(2+) contacts are provided by E417, H419, and E462. Substrate contacts are provided by residues E462 and 538–541; that span reads EYAH. Catalysis depends on E462, which acts as the Proton donor. E538 (nucleophile) is an active-site residue. Residue N598 participates in Mg(2+) binding. Residues F602 and N605 each coordinate Na(+). N605 and W1000 together coordinate substrate.

This sequence belongs to the glycosyl hydrolase 2 family. Homotetramer. Requires Mg(2+) as cofactor. Na(+) is required as a cofactor.

The enzyme catalyses Hydrolysis of terminal non-reducing beta-D-galactose residues in beta-D-galactosides.. This is Beta-galactosidase from Escherichia coli (strain UTI89 / UPEC).